We begin with the raw amino-acid sequence, 61 residues long: Large ribosomal subunit protein uL29 (61 aa).

It belongs to the universal ribosomal protein uL29 family.

The chain is Large ribosomal subunit protein uL29 from Campylobacter jejuni subsp. jejuni serotype O:6 (strain 81116 / NCTC 11828).